Here is a 279-residue protein sequence, read N- to C-terminus: NADPH-dependent 7-cyano-7-deazaguanine reductase (279 aa).

Position 86–88 (86–88) interacts with substrate; it reads IES. 88–89 contributes to the NADPH binding site; sequence SK. C187 serves as the catalytic Thioimide intermediate. The Proton donor role is filled by D194. 226–227 lines the substrate pocket; sequence HE. An NADPH-binding site is contributed by 255–256; the sequence is RG.

Belongs to the GTP cyclohydrolase I family. QueF type 2 subfamily. Homodimer.

The protein resides in the cytoplasm. It catalyses the reaction 7-aminomethyl-7-carbaguanine + 2 NADP(+) = 7-cyano-7-deazaguanine + 2 NADPH + 3 H(+). It functions in the pathway tRNA modification; tRNA-queuosine biosynthesis. In terms of biological role, catalyzes the NADPH-dependent reduction of 7-cyano-7-deazaguanine (preQ0) to 7-aminomethyl-7-deazaguanine (preQ1). The sequence is that of NADPH-dependent 7-cyano-7-deazaguanine reductase from Haemophilus influenzae (strain PittGG).